A 212-amino-acid chain; its full sequence is Orotate phosphoribosyltransferase (212 aa).

5-phospho-alpha-D-ribose 1-diphosphate contacts are provided by residues R97, K101, H103, and 123-131; that span reads DDLISTGGS. S127 is a binding site for orotate.

This sequence belongs to the purine/pyrimidine phosphoribosyltransferase family. PyrE subfamily. In terms of assembly, homodimer. The cofactor is Mg(2+).

It carries out the reaction orotidine 5'-phosphate + diphosphate = orotate + 5-phospho-alpha-D-ribose 1-diphosphate. The protein operates within pyrimidine metabolism; UMP biosynthesis via de novo pathway; UMP from orotate: step 1/2. Catalyzes the transfer of a ribosyl phosphate group from 5-phosphoribose 1-diphosphate to orotate, leading to the formation of orotidine monophosphate (OMP). The chain is Orotate phosphoribosyltransferase from Lactiplantibacillus plantarum (strain ATCC BAA-793 / NCIMB 8826 / WCFS1) (Lactobacillus plantarum).